The sequence spans 217 residues: Probable GTP-binding protein EngB (217 aa).

An EngB-type G domain is found at 37 to 214; the sequence is AGVEVAFAGR…RAAMARLIGE (178 aa). Residues 45–52, 72–76, 92–95, 159–162, and 193–195 each bind GTP; these read GRSNVGKS, GRTQE, DMPG, TKAD, and TSS. The Mg(2+) site is built by Ser-52 and Thr-74.

It belongs to the TRAFAC class TrmE-Era-EngA-EngB-Septin-like GTPase superfamily. EngB GTPase family. Mg(2+) is required as a cofactor.

Necessary for normal cell division and for the maintenance of normal septation. The chain is Probable GTP-binding protein EngB from Nitrobacter hamburgensis (strain DSM 10229 / NCIMB 13809 / X14).